Here is a 423-residue protein sequence, read N- to C-terminus: Gamma-glutamyl phosphate reductase (423 aa).

This sequence belongs to the gamma-glutamyl phosphate reductase family.

It localises to the cytoplasm. It catalyses the reaction L-glutamate 5-semialdehyde + phosphate + NADP(+) = L-glutamyl 5-phosphate + NADPH + H(+). It functions in the pathway amino-acid biosynthesis; L-proline biosynthesis; L-glutamate 5-semialdehyde from L-glutamate: step 2/2. Catalyzes the NADPH-dependent reduction of L-glutamate 5-phosphate into L-glutamate 5-semialdehyde and phosphate. The product spontaneously undergoes cyclization to form 1-pyrroline-5-carboxylate. This Burkholderia thailandensis (strain ATCC 700388 / DSM 13276 / CCUG 48851 / CIP 106301 / E264) protein is Gamma-glutamyl phosphate reductase.